Consider the following 54-residue polypeptide: Apelin receptor early endogenous ligand (54 aa).

Positions 1 to 22 (MRFQQFLFAFFIFIMSLLLISG) are cleaved as a signal peptide. An N-linked (GlcNAc...) asparagine glycan is attached at Asn-27.

The protein belongs to the Elabela/Toddler family. Interacts with APLNR. As to expression, expressed in the intima of blood vessels. Expressed in endothelial cells in blood vessels in the heart and lung. Expressed in cytotrophoblasts and syncytiotrophoblasts of first-trimester placental tissue and term placentas (at protein level). Not detected in smooth muscle cells or cardiomyocytes (at protein level). Expressed in kidney. Expressed in blood vessels. Expressed in embryonic (ESCs) and induced (iPSCs) pluripotent stem cells. Most highly expressed in undifferentiated embryonic stem cell and is rapidly down-regulated during differentiation.

The protein resides in the secreted. It is found in the extracellular space. Functionally, peptide hormone that functions as endogenous ligand for the G-protein-coupled apelin receptor (APLNR/APJ), that plays a role in the regulation of normal cardiovascular function and fluid homeostasis. Functions as a balanced agonist activating both G(i) protein pathway and beta-arrestin pathway of APLNR. Downstream G proteins activation, apelin can inhibit cAMP production and activate key intracellular effectors such as ERKs. On the other hand, APLNR activation induces beta-arrestin recruitment to the membrane leading to desensitization and internalization of the receptor. Required for mesendodermal differentiation, blood vessels formation and heart morphogenesis during early development and for adult cardiovascular homeostasis. Acts as a motogen by promoting mesendodermal cell migration during gastrulation by binding and activating APLNR. Acts as an early embryonic regulator of cellular movement with a role in migration and development of cardiac progenitor cells. May act as a chemoattractant for the activation of angioblast migration toward the embryonic midline, i.e. the position of the future vessel formation, during vasculogenesis. Positively regulates sinus venosus (SV)-derived endothelial cells migration into the developing heart to promote coronary blood vessel sprouting. Plays a role in placental vascular development; promotes placental trophoblast invasion and spiral artery remodeling in the uterus. Involved in the regulation of maternal cardiovascular homeostasis to prevent gestational hypertension and for potent cardioprotective functions during heart failure. Mediates myocardial contractility in an ERK1/2-dependent manner. The sequence is that of Apelin receptor early endogenous ligand from Homo sapiens (Human).